An 834-amino-acid chain; its full sequence is 5-hydroxytryptamine receptor 2A (834 aa).

At M1–S230 the chain is on the extracellular side. The segment at T56–S75 is disordered. 8 N-linked (GlcNAc...) asparagine glycosylation sites follow: N68, N97, N161, N175, N183, N194, N203, and N209. The helical transmembrane segment at V231–L253 threads the bilayer. Topologically, residues E254 to Y263 are cytoplasmic. Residues L264 to V285 traverse the membrane as a helical segment. Over Y286–D300 the chain is Extracellular. An intrachain disulfide couples C299 to C378. Residues I301–V322 form a helical membrane-spanning segment. Residues D323–R341 are Cytoplasmic-facing. Residues V342–W364 form a helical membrane-spanning segment. Over K365–T391 the chain is Extracellular. The chain crosses the membrane as a helical span at residues C392–A413. The Cytoplasmic portion of the chain corresponds to R414–T752. 5 disordered regions span residues R420–T442, K460–G516, Q531–Q599, L617–A640, and S674–A743. Polar residues-rich tracts occupy residues G482–D502 and Q532–A542. A compositionally biased stretch (basic and acidic residues) spans R551–Q564. Positions E565 to E575 are enriched in acidic residues. The segment covering T582 to T593 has biased composition (low complexity). A compositionally biased stretch (polar residues) spans S674–S694. Over residues Q702–Q723 the composition is skewed to low complexity. A helical transmembrane segment spans residues L753–L776. The Extracellular portion of the chain corresponds to C777 to S785. A helical membrane pass occupies residues V786–F808. The Cytoplasmic segment spans residues S809–L834.

The protein belongs to the G-protein coupled receptor 1 family.

It is found in the cell membrane. In terms of biological role, this is one of the several different receptors for 5-hydroxytryptamine (serotonin), a biogenic hormone that functions as a neurotransmitter, a hormone, and a mitogen. The activity of this receptor is mediated by G proteins which inhibit adenylate cyclase. The sequence is that of 5-hydroxytryptamine receptor 2A (5-HT1A) from Drosophila melanogaster (Fruit fly).